The primary structure comprises 164 residues: Endoribonuclease YbeY (164 aa).

Positions 124, 128, and 134 each coordinate Zn(2+).

Belongs to the endoribonuclease YbeY family. The cofactor is Zn(2+).

Its subcellular location is the cytoplasm. In terms of biological role, single strand-specific metallo-endoribonuclease involved in late-stage 70S ribosome quality control and in maturation of the 3' terminus of the 16S rRNA. This chain is Endoribonuclease YbeY, found in Nitrosomonas europaea (strain ATCC 19718 / CIP 103999 / KCTC 2705 / NBRC 14298).